The primary structure comprises 80 residues: RNA-binding protein Hfq (80 aa).

The Sm domain occupies 10 to 70 (DIFLNQVRKE…ISTISPMKSV (61 aa)).

This sequence belongs to the Hfq family. Homohexamer.

Its function is as follows. RNA chaperone that binds small regulatory RNA (sRNAs) and mRNAs to facilitate mRNA translational regulation in response to envelope stress, environmental stress and changes in metabolite concentrations. Also binds with high specificity to tRNAs. The chain is RNA-binding protein Hfq from Ruminiclostridium cellulolyticum (strain ATCC 35319 / DSM 5812 / JCM 6584 / H10) (Clostridium cellulolyticum).